We begin with the raw amino-acid sequence, 418 residues long: Ig-like V-type domain-containing protein FAM187A (418 aa).

A signal peptide spans 1 to 18 (MRLAPTTVLLWAWGSLQA). The Extracellular portion of the chain corresponds to 19–376 (FEIVEKENIF…ASLSDPETRT (358 aa)). One can recognise an Ig-like V-type domain in the interval 267 to 361 (PWVPQVPIQF…IAGFRLGVTS (95 aa)). A disulfide bridge links C289 with C345. N317 carries an N-linked (GlcNAc...) asparagine glycan. Residues 377 to 397 (AVELTLIGYLLIAVVFVTIHL) form a helical membrane-spanning segment. Topologically, residues 398–418 (CRCCCQSRCCPNFSAQTLLQL) are cytoplasmic.

Belongs to the FAM187 family.

The protein localises to the membrane. This Rattus norvegicus (Rat) protein is Ig-like V-type domain-containing protein FAM187A (Fam187a).